A 269-amino-acid chain; its full sequence is Tryptophan synthase alpha chain (269 aa).

Catalysis depends on proton acceptor residues Glu54 and Asp65.

Belongs to the TrpA family. In terms of assembly, tetramer of two alpha and two beta chains.

It carries out the reaction (1S,2R)-1-C-(indol-3-yl)glycerol 3-phosphate + L-serine = D-glyceraldehyde 3-phosphate + L-tryptophan + H2O. It functions in the pathway amino-acid biosynthesis; L-tryptophan biosynthesis; L-tryptophan from chorismate: step 5/5. The alpha subunit is responsible for the aldol cleavage of indoleglycerol phosphate to indole and glyceraldehyde 3-phosphate. This is Tryptophan synthase alpha chain from Synechococcus sp. (strain CC9902).